A 92-amino-acid polypeptide reads, in one-letter code: Cytochrome c2 (92 aa).

Residues Cys-12, Cys-15, His-16, and Met-66 each coordinate heme c.

This sequence belongs to the cytochrome c family. Post-translationally, binds 1 heme c group covalently per subunit.

Functionally, cytochrome c2 is found mainly in purple, non-sulfur, photosynthetic bacteria where it functions as the electron donor to the oxidized bacteriochlorophyll in the photophosphorylation pathway. However, it may also have a role in the respiratory chain and is found in some non-photosynthetic bacteria. The chain is Cytochrome c2 from Rhodocyclus tenuis (Rhodospirillum tenue).